The sequence spans 393 residues: GTP exchange factor for ARFs 1 (393 aa).

Polar residues predominate over residues 1–12; the sequence is MSSRYSERNGLS. Residues 1–21 are disordered; the sequence is MSSRYSERNGLSETEKMTLPK. Residues 12–54 adopt a coiled-coil conformation; sequence SETEKMTLPKVRKRKAQLVDEIEALKNEVREVDEELDQVYYTH. Residues 53 to 239 form the SEC7 domain; the sequence is THPKSKEYHK…TEVYESVSVT (187 aa). One can recognise a PH domain in the interval 261–377; it reads HAEREGWLFK…MRSWINAISR (117 aa).

In terms of biological role, promotes guanine-nucleotide exchange on ARF. Promotes the activation of ARF through replacement of GDP with GTP. Plays a role in cell shedding during embryogenesis, probably by promoting the endocytosis of cell adhesion molecules. This is GTP exchange factor for ARFs 1 (grp-1) from Caenorhabditis elegans.